A 522-amino-acid polypeptide reads, in one-letter code: Probable mannosyltransferase KTR5 (522 aa).

The Cytoplasmic portion of the chain corresponds to 1 to 16 (MLLIRRTINAFLGCIH). Residues 17–37 (CNLTATCILIAFVITMYVVLV) traverse the membrane as a helical; Signal-anchor for type II membrane protein segment. The segment at 38 to 82 (SEPASVDGTMGNFLPFSKMDLATKRDRPFYSNCVNTQDYLLNPSY) is stem region. The Lumenal segment spans residues 38–522 (SEPASVDGTM…REDYLRQFGN (485 aa)). Residues 83-522 (IKQNASFVML…REDYLRQFGN (440 aa)) are catalytic. N-linked (GlcNAc...) asparagine glycosylation is present at N86. E363 (nucleophile) is an active-site residue.

The protein belongs to the glycosyltransferase 15 family.

It localises to the membrane. Its function is as follows. Possible glycosyltransferase that transfers an alpha-D-mannosyl residue from GDP-mannose into lipid-linked oligosaccharide, forming an alpha-(1-&gt;2)-D-mannosyl-D-mannose linkage. The chain is Probable mannosyltransferase KTR5 (KTR5) from Saccharomyces cerevisiae (strain ATCC 204508 / S288c) (Baker's yeast).